The chain runs to 187 residues: Ribosome-recycling factor (187 aa).

Belongs to the RRF family.

Its subcellular location is the cytoplasm. Its function is as follows. Responsible for the release of ribosomes from messenger RNA at the termination of protein biosynthesis. May increase the efficiency of translation by recycling ribosomes from one round of translation to another. This is Ribosome-recycling factor from Bradyrhizobium sp. (strain ORS 278).